Here is a 650-residue protein sequence, read N- to C-terminus: FAS-associated factor 1 (650 aa).

A UBA domain is found at 1–57; the sequence is MASNMDREMILADFQACTGIENIDEAITLLEQNNWDLVAAINGVIPQENGILQSEYG. The interval 62 to 87 is disordered; the sequence is PGPAFNPASHPASAPTSSSSSAFRPV. Low complexity predominate over residues 68 to 83; that stretch reads PASHPASAPTSSSSSA. Ser-320 is subject to Phosphoserine. The 78-residue stretch at 569-646 folds into the UBX domain; sequence NAEPVSKLRI…KLFPQETLFL (78 aa). Phosphothreonine is present on Thr-580. Ser-582 carries the post-translational modification Phosphoserine.

In terms of assembly, interacts with CDT1 and ATPase VCP/p97. Interacts (via UBA domain) with FAS (via death domain). Interacts (via UBA domain) with NLRP12 (via DAPIN/PYRIN domain). Most abundant in testis, slightly less abundant in skeletal muscle and heart, followed by prostate, thymus, ovary, small intestine, and colon. Not detected in the peripheral blood leukocytes.

The protein resides in the nucleus. Ubiquitin-binding protein. Required for the progression of DNA replication forks by targeting DNA replication licensing factor CDT1 for degradation. Potentiates but cannot initiate FAS-induced apoptosis. In Homo sapiens (Human), this protein is FAS-associated factor 1 (FAF1).